Reading from the N-terminus, the 261-residue chain is uncharacterized protein (261 aa).

The signal sequence occupies residues 1-22; the sequence is MRDSKRVVLYISIIVLSIFIIG. Cysteine 23 carries the N-palmitoyl cysteine lipid modification. Cysteine 23 carries the S-diacylglycerol cysteine lipid modification.

This sequence belongs to the staphylococcal tandem lipoprotein family.

The protein resides in the cell membrane. This is an uncharacterized protein from Staphylococcus aureus (strain Mu50 / ATCC 700699).